The chain runs to 507 residues: Phosphoenolpyruvate carboxylase (507 aa).

The disordered stretch occupies residues 1–25 (MHKIDRKIPNIMGTQHPDNAGVPFF).

Belongs to the PEPCase type 2 family. Homotetramer. Requires Mg(2+) as cofactor.

It catalyses the reaction oxaloacetate + phosphate = phosphoenolpyruvate + hydrogencarbonate. In terms of biological role, catalyzes the irreversible beta-carboxylation of phosphoenolpyruvate (PEP) to form oxaloacetate (OAA), a four-carbon dicarboxylic acid source for the tricarboxylic acid cycle. The chain is Phosphoenolpyruvate carboxylase from Oenococcus oeni (strain ATCC BAA-331 / PSU-1).